We begin with the raw amino-acid sequence, 125 residues long: Histone H2A (125 aa).

Basic residues predominate over residues Met1–Ser18. The tract at residues Met1–Ala21 is disordered. Ser2 carries the N-acetylserine modification. N5-methylglutamine is present on Gln104.

It belongs to the histone H2A family. The nucleosome is a histone octamer containing two molecules each of H2A, H2B, H3 and H4 assembled in one H3-H4 heterotetramer and two H2A-H2B heterodimers. The octamer wraps approximately 147 bp of DNA.

The protein localises to the nucleus. It is found in the chromosome. In terms of biological role, core component of nucleosome. Nucleosomes wrap and compact DNA into chromatin, limiting DNA accessibility to the cellular machineries which require DNA as a template. Histones thereby play a central role in transcription regulation, DNA repair, DNA replication and chromosomal stability. DNA accessibility is regulated via a complex set of post-translational modifications of histones, also called histone code, and nucleosome remodeling. The chain is Histone H2A from Mytilus californianus (California mussel).